A 140-amino-acid polypeptide reads, in one-letter code: Pro-Viral epidermal growth factor (140 aa).

The signal sequence occupies residues 1-18; the sequence is MSMKYLMLLFAAMIIRSF. The Extracellular segment spans residues 19 to 100; it reads ADSGNAIETT…SENPNTTTSY (82 aa). An N-linked (GlcNAc...) asparagine; by host glycan is attached at N34. Residues 41 to 81 enclose the EGF-like domain; it reads AIRLCGPEGDGYCLHGDCIHARDIDGMYCRCSHGYTGIRCQ. 3 cysteine pairs are disulfide-bonded: C45–C58, C53–C69, and C71–C80. N-linked (GlcNAc...) asparagine; by host glycosylation occurs at N95. Residues 101–121 traverse the membrane as a helical segment; that stretch reads IPSPGIMLVLVGIIIITCCLL. At 122–140 the chain is on the cytoplasmic side; that stretch reads SVYRFTRRTKLPIQDMVVP.

Belongs to the orthopoxvirus OPG019 family. As to quaternary structure, viral epidermal growth factor interacts with host EGFR and promotes EGFR dimerization. Cleaved at the cell surface by host ADAM10, thereby releasing the secreted form of VGF.

It localises to the host membrane. The protein localises to the secreted. Functionally, stimulates cellular proliferation (hyperplasia)and mobility around infected cells to promote rapid and efficient spread of infection. This effect is beneficial for virus replication in vivo, because poxviruses replicate possibly better in proliferating cells than in quiescent cells. Acts by binding host EGFR, inducing its dimerization, autophosphorylation and leading to activation of several cellular pathways regulating cell proliferation or cell survival. The activation by host EGFR of mitogen activated protein kinases (MAPK) and extracellular-signal regulated kinases (ERK) are essential for the positive effect of vaccinia growth factor on poxvirus virulence in vivo. The protein is Pro-Viral epidermal growth factor (OPG019) of Bos taurus (Bovine).